The chain runs to 533 residues: Na(+)/H(+) antiporter NhaB (533 aa).

11 helical membrane passes run 10–30 (IGNFLGNSPKWYKIAILSFLI), 67–87 (PGGLLAIQAVAIGMTSASQVL), 96–116 (VLLLLVFMVAGIYFMKQLLLF), 131–165 (VSLMFCLASAFLSAFLDALTVIAVIITVAVGFYSI), 209–229 (LLMHAGVGTALGGVCTMVGEP), 247–267 (IRMSPVTVPVLFAGILTCFLV), 310–330 (AFVGVWLIAGLALHLASVGLI), 355–375 (EEALPFTALLAVFFAVVAVII), 396–416 (LVIFYIANGLLSMVSDNVFVG), 454–474 (ATPNGQAAFLFLLTSALAPLI), and 481–501 (MVWMALPYTIVLSIVGVMAIE).

The protein belongs to the NhaB Na(+)/H(+) (TC 2.A.34) antiporter family.

The protein localises to the cell inner membrane. It carries out the reaction 2 Na(+)(in) + 3 H(+)(out) = 2 Na(+)(out) + 3 H(+)(in). Its function is as follows. Na(+)/H(+) antiporter that extrudes sodium in exchange for external protons. This Shewanella sp. (strain MR-4) protein is Na(+)/H(+) antiporter NhaB.